The chain runs to 364 residues: Ribosomal RNA large subunit methyltransferase F (364 aa).

The segment covering 1-17 (MPKPAIKTAAKPATSSA) has biased composition (low complexity). The interval 1-53 (MPKPAIKTAAKPATSSAGKRGKPNTPKSVAKPKTAKPKTASKPKVKPGEKKRL) is disordered. A compositionally biased stretch (basic residues) spans 33–53 (KTAKPKTASKPKVKPGEKKRL).

Belongs to the methyltransferase superfamily. METTL16/RlmF family.

It localises to the cytoplasm. It carries out the reaction adenosine(1618) in 23S rRNA + S-adenosyl-L-methionine = N(6)-methyladenosine(1618) in 23S rRNA + S-adenosyl-L-homocysteine + H(+). In terms of biological role, specifically methylates the adenine in position 1618 of 23S rRNA. In Shewanella sp. (strain MR-7), this protein is Ribosomal RNA large subunit methyltransferase F.